A 304-amino-acid polypeptide reads, in one-letter code: Acetyl-coenzyme A carboxylase carboxyl transferase subunit beta (304 aa).

The CoA carboxyltransferase N-terminal domain occupies 23 to 292; that stretch reads VWTKCDSCGQ…PNPEAPREGV (270 aa). 4 residues coordinate Zn(2+): Cys27, Cys30, Cys46, and Cys49. The C4-type zinc-finger motif lies at 27–49; that stretch reads CDSCGQVLYRAELERNLEVCPKC. The disordered stretch occupies residues 284–304; that stretch reads NPEAPREGVVVPPVPDQEPEA. Residues 295–304 are compositionally biased toward pro residues; that stretch reads PPVPDQEPEA.

It belongs to the AccD/PCCB family. Acetyl-CoA carboxylase is a heterohexamer composed of biotin carboxyl carrier protein (AccB), biotin carboxylase (AccC) and two subunits each of ACCase subunit alpha (AccA) and ACCase subunit beta (AccD). The cofactor is Zn(2+).

The protein localises to the cytoplasm. The enzyme catalyses N(6)-carboxybiotinyl-L-lysyl-[protein] + acetyl-CoA = N(6)-biotinyl-L-lysyl-[protein] + malonyl-CoA. The protein operates within lipid metabolism; malonyl-CoA biosynthesis; malonyl-CoA from acetyl-CoA: step 1/1. Functionally, component of the acetyl coenzyme A carboxylase (ACC) complex. Biotin carboxylase (BC) catalyzes the carboxylation of biotin on its carrier protein (BCCP) and then the CO(2) group is transferred by the transcarboxylase to acetyl-CoA to form malonyl-CoA. In Shigella flexneri, this protein is Acetyl-coenzyme A carboxylase carboxyl transferase subunit beta.